We begin with the raw amino-acid sequence, 46 residues long: uncharacterized protein (46 aa).

This is an uncharacterized protein from Escherichia coli (Bacteriophage T4).